Here is a 297-residue protein sequence, read N- to C-terminus: Putative S-adenosyl-L-methionine-dependent methyltransferase MSMEG_0614/MSMEI_0598 (297 aa).

Residues D125 and 154 to 155 (DL) contribute to the S-adenosyl-L-methionine site.

Belongs to the UPF0677 family.

Its function is as follows. Exhibits S-adenosyl-L-methionine-dependent methyltransferase activity. This Mycolicibacterium smegmatis (strain ATCC 700084 / mc(2)155) (Mycobacterium smegmatis) protein is Putative S-adenosyl-L-methionine-dependent methyltransferase MSMEG_0614/MSMEI_0598.